The primary structure comprises 680 residues: NADPH--cytochrome P450 reductase (680 aa).

Topologically, residues 1-5 are lumenal; that stretch reads MALDK. A helical transmembrane segment spans residues 6–23; the sequence is LDLYVIIVLAVAVAAYFA. At 24-680 the chain is on the cytoplasmic side; sequence KNQFLDQPQD…VQNRYQEDVW (657 aa). The Flavodoxin-like domain maps to 60–204; that stretch reads TLLLFGSQTG…DFLTWKDNVF (145 aa). FMN contacts are provided by residues 66–71, 117–120, 152–161, and Asp187; these read SQTGTA, ATYG, and LGNSTYEFYN. The FAD-binding FR-type domain occupies 264–509; that stretch reads THPYLAKISK…SGPRNKFNKF (246 aa). Position 283 (Arg283) interacts with NADP(+). Residues 439–442, 457–459, and 473–476 each bind FAD; these read RYYS, TAV, and GVVT. NADP(+) contacts are provided by residues Thr537, 599 to 600, 606 to 610, and Asp642; these read SR and KVYVQ. An FAD-binding site is contributed by Trp680.

The protein belongs to the NADPH--cytochrome P450 reductase family. It in the N-terminal section; belongs to the flavodoxin family. This sequence in the C-terminal section; belongs to the flavoprotein pyridine nucleotide cytochrome reductase family. FAD is required as a cofactor. Requires FMN as cofactor.

The protein resides in the endoplasmic reticulum membrane. It is found in the mitochondrion outer membrane. Its subcellular location is the cell membrane. The enzyme catalyses 2 oxidized [cytochrome P450] + NADPH = 2 reduced [cytochrome P450] + NADP(+) + H(+). Its function is as follows. This enzyme is required for electron transfer from NADP to cytochrome P450 in microsomes. It can also provide electron transfer to heme oxygenase and cytochrome B5. Involved in ergosterol biosynthesis. This Candida maltosa (Yeast) protein is NADPH--cytochrome P450 reductase.